The primary structure comprises 56 residues: Small ribosomal subunit protein uS14 (56 aa).

Zn(2+) contacts are provided by C21, C24, C39, and C42.

Belongs to the universal ribosomal protein uS14 family. In terms of assembly, component of the 40S small ribosomal subunit. Zn(2+) serves as cofactor.

The protein localises to the cytoplasm. Its subcellular location is the cytosol. It localises to the rough endoplasmic reticulum. The polypeptide is Small ribosomal subunit protein uS14 (RpS29) (Plutella xylostella (Diamondback moth)).